The chain runs to 156 residues: Transcriptional repressor NrdR (156 aa).

A zinc finger lies at 3 to 34 (CPFCQHDDTQVLDTRISEEGDSIRRRRRCVSC). The ATP-cone domain occupies 49-139 (PVIVKKNGSR…VYKSFEDVAE (91 aa)).

Belongs to the NrdR family. Zn(2+) is required as a cofactor.

In terms of biological role, negatively regulates transcription of bacterial ribonucleotide reductase nrd genes and operons by binding to NrdR-boxes. This chain is Transcriptional repressor NrdR, found in Herminiimonas arsenicoxydans.